The sequence spans 1024 residues: Carbamoyl phosphate synthase large chain (1024 aa).

Residues 1–396 (MDIKKILVIG…AWQKAVRMID (396 aa)) form a carboxyphosphate synthetic domain region. Positions 125, 165, 171, 172, 204, 206, 211, 237, 238, 239, 280, and 294 each coordinate ATP. In terms of domain architecture, ATP-grasp 1 spans 129–323 (QKAMREAGIP…LAYIAAKLAL (195 aa)). Q280, E294, and N296 together coordinate Mg(2+). Residues Q280, E294, and N296 each contribute to the Mn(2+) site. The tract at residues 397-536 (IGEPGLVGGP…LTYGGQYDDK (140 aa)) is oligomerization domain. The tract at residues 536 to 917 (KTPGVDYLVV…LKSWLSATPN (382 aa)) is carbamoyl phosphate synthetic domain. The ATP-grasp 2 domain occupies 660–849 (SKLLDRLGIK…YMSLVADVLT (190 aa)). The ATP site is built by R696, K735, E742, G766, V767, H768, S769, Q809, and E820. 3 residues coordinate Mg(2+): Q809, E820, and N822. The Mn(2+) site is built by Q809, E820, and N822. The region spanning 917–1024 (NKIPSKTALI…KNGKLEVAPW (108 aa)) is the MGS-like domain. Residues 918–1024 (KIPSKTALIY…KNGKLEVAPW (107 aa)) are allosteric domain.

This sequence belongs to the CarB family. Composed of two chains; the small (or glutamine) chain promotes the hydrolysis of glutamine to ammonia, which is used by the large (or ammonia) chain to synthesize carbamoyl phosphate. Tetramer of heterodimers (alpha,beta)4. Mg(2+) serves as cofactor. It depends on Mn(2+) as a cofactor.

It catalyses the reaction hydrogencarbonate + L-glutamine + 2 ATP + H2O = carbamoyl phosphate + L-glutamate + 2 ADP + phosphate + 2 H(+). It carries out the reaction hydrogencarbonate + NH4(+) + 2 ATP = carbamoyl phosphate + 2 ADP + phosphate + 2 H(+). The protein operates within amino-acid biosynthesis; L-arginine biosynthesis; carbamoyl phosphate from bicarbonate: step 1/1. It participates in pyrimidine metabolism; UMP biosynthesis via de novo pathway; (S)-dihydroorotate from bicarbonate: step 1/3. Large subunit of the glutamine-dependent carbamoyl phosphate synthetase (CPSase). CPSase catalyzes the formation of carbamoyl phosphate from the ammonia moiety of glutamine, carbonate, and phosphate donated by ATP, constituting the first step of 2 biosynthetic pathways, one leading to arginine and/or urea and the other to pyrimidine nucleotides. The large subunit (synthetase) binds the substrates ammonia (free or transferred from glutamine from the small subunit), hydrogencarbonate and ATP and carries out an ATP-coupled ligase reaction, activating hydrogencarbonate by forming carboxy phosphate which reacts with ammonia to form carbamoyl phosphate. This chain is Carbamoyl phosphate synthase large chain, found in Pyrobaculum aerophilum (strain ATCC 51768 / DSM 7523 / JCM 9630 / CIP 104966 / NBRC 100827 / IM2).